Here is a 529-residue protein sequence, read N- to C-terminus: Bifunctional purine biosynthesis protein PurH (529 aa).

Residues 1–148 (MQQRRPIRRA…KNHKDVAIVV (148 aa)) enclose the MGS-like domain.

It belongs to the PurH family.

The enzyme catalyses (6R)-10-formyltetrahydrofolate + 5-amino-1-(5-phospho-beta-D-ribosyl)imidazole-4-carboxamide = 5-formamido-1-(5-phospho-D-ribosyl)imidazole-4-carboxamide + (6S)-5,6,7,8-tetrahydrofolate. It catalyses the reaction IMP + H2O = 5-formamido-1-(5-phospho-D-ribosyl)imidazole-4-carboxamide. It participates in purine metabolism; IMP biosynthesis via de novo pathway; 5-formamido-1-(5-phospho-D-ribosyl)imidazole-4-carboxamide from 5-amino-1-(5-phospho-D-ribosyl)imidazole-4-carboxamide (10-formyl THF route): step 1/1. Its pathway is purine metabolism; IMP biosynthesis via de novo pathway; IMP from 5-formamido-1-(5-phospho-D-ribosyl)imidazole-4-carboxamide: step 1/1. The sequence is that of Bifunctional purine biosynthesis protein PurH from Pectobacterium atrosepticum (strain SCRI 1043 / ATCC BAA-672) (Erwinia carotovora subsp. atroseptica).